A 381-amino-acid polypeptide reads, in one-letter code: L-lactate dehydrogenase A-like 6B (381 aa).

NAD(+) is bound by residues Asp101–Lys106 and Arg148. 3 residues coordinate substrate: Arg155, Asn187, and Arg218. Position 187 (Asn187) interacts with NAD(+). Residue His242 is the Proton acceptor of the active site. Thr297 provides a ligand contact to substrate.

Belongs to the LDH/MDH superfamily. LDH family. Testis specific.

It catalyses the reaction (S)-lactate + NAD(+) = pyruvate + NADH + H(+). Its pathway is fermentation; pyruvate fermentation to lactate; (S)-lactate from pyruvate: step 1/1. The chain is L-lactate dehydrogenase A-like 6B (LDHAL6B) from Homo sapiens (Human).